Reading from the N-terminus, the 335-residue chain is Holliday junction branch migration complex subunit RuvB (335 aa).

The interval 1-183 is large ATPase domain (RuvB-L); that stretch reads MDERIISSET…FGVIDHLEFY (183 aa). ATP contacts are provided by residues Leu22, Arg23, Gly64, Lys67, Thr68, Thr69, 130 to 132, Arg173, Tyr183, and Arg220; that span reads EDY. Thr68 lines the Mg(2+) pocket. The small ATPAse domain (RuvB-S) stretch occupies residues 184-254; that stretch reads TEEQLTEIVL…LAKEALTLLQ (71 aa). Positions 257 to 335 are head domain (RuvB-H); it reads PRGLDTIDQK…HLGISYEKEV (79 aa). DNA is bound by residues Arg293, Arg312, and Arg317.

Belongs to the RuvB family. Homohexamer. Forms an RuvA(8)-RuvB(12)-Holliday junction (HJ) complex. HJ DNA is sandwiched between 2 RuvA tetramers; dsDNA enters through RuvA and exits via RuvB. An RuvB hexamer assembles on each DNA strand where it exits the tetramer. Each RuvB hexamer is contacted by two RuvA subunits (via domain III) on 2 adjacent RuvB subunits; this complex drives branch migration. In the full resolvosome a probable DNA-RuvA(4)-RuvB(12)-RuvC(2) complex forms which resolves the HJ.

It is found in the cytoplasm. The catalysed reaction is ATP + H2O = ADP + phosphate + H(+). The RuvA-RuvB-RuvC complex processes Holliday junction (HJ) DNA during genetic recombination and DNA repair, while the RuvA-RuvB complex plays an important role in the rescue of blocked DNA replication forks via replication fork reversal (RFR). RuvA specifically binds to HJ cruciform DNA, conferring on it an open structure. The RuvB hexamer acts as an ATP-dependent pump, pulling dsDNA into and through the RuvAB complex. RuvB forms 2 homohexamers on either side of HJ DNA bound by 1 or 2 RuvA tetramers; 4 subunits per hexamer contact DNA at a time. Coordinated motions by a converter formed by DNA-disengaged RuvB subunits stimulates ATP hydrolysis and nucleotide exchange. Immobilization of the converter enables RuvB to convert the ATP-contained energy into a lever motion, pulling 2 nucleotides of DNA out of the RuvA tetramer per ATP hydrolyzed, thus driving DNA branch migration. The RuvB motors rotate together with the DNA substrate, which together with the progressing nucleotide cycle form the mechanistic basis for DNA recombination by continuous HJ branch migration. Branch migration allows RuvC to scan DNA until it finds its consensus sequence, where it cleaves and resolves cruciform DNA. The protein is Holliday junction branch migration complex subunit RuvB of Listeria innocua serovar 6a (strain ATCC BAA-680 / CLIP 11262).